The chain runs to 563 residues: MDFGSLETVVANSAFIAARGSFDGSSSQPSRDKKYLAKLKLPPLSKCESLRDSLSLEFESVCLEQPIGKKLFQQFLQSAEKHLPALELWKDIEDYDTADNDLQPQKAQTILAQYLDPQAKLFCSFLDEGIVAKFKEGPVEIQDGLFQPLLQATLAHLGQAPFQEYLGSLYFLRFLQWKWLEAQPMGEDWFLDFRVLGKGGFGEVSACQMKATGKLYACKKLNKKRLKKRKGYQGAMVEKKILMKVHSRFIVSLAYAFETKADLCLVMTIMNGGDIRYHIYNVNEENPGFPEPRALFYTAQIICGLEHLHQRRIVYRDLKPENVLLDNDGNVRISDLGLAVELLDGQSKTKGYAGTPGFMAPELLQGEEYDFSVDYFALGVTLYEMIAARGPFRARGEKVENKELKHRIISEPVKYPDKFSQASKDFCEALLEKDPEKRLGFRDETCDKLRAHPLFKDLNWRQLEAGMLMPPFIPDSKTVYAKDIQDVGAFSTVKGVAFDKTDTEFFQEFATGNCPIPWQEEMIETGIFGELNVWRSDGQMPDDMKGISGGSSSSSKSGMCLVS.

Positions 1 to 15 (MDFGSLETVVANSAF) are interaction with RCVRN. An N-terminal region spans residues 1–189 (MDFGSLETVV…LEAQPMGEDW (189 aa)). Residue S5 is modified to Phosphoserine. At T8 the chain carries Phosphothreonine. A Phosphoserine; by PKA and autocatalysis modification is found at S21. One can recognise an RGS domain in the interval 58-175 (FESVCLEQPI…LGSLYFLRFL (118 aa)). A Protein kinase domain is found at 190 to 455 (FLDFRVLGKG…CDKLRAHPLF (266 aa)). ATP is bound by residues 196-204 (LGKGGFGEV) and K219. The Proton acceptor role is filled by D317. In terms of domain architecture, AGC-kinase C-terminal spans 456–521 (KDLNWRQLEA…GNCPIPWQEE (66 aa)). The tract at residues 456 to 563 (KDLNWRQLEA…SSKSGMCLVS (108 aa)) is C-terminal. Residue S491 is modified to Phosphoserine; by autocatalysis. At T492 the chain carries Phosphothreonine; by autocatalysis. The interval 539-563 (QMPDDMKGISGGSSSSSKSGMCLVS) is disordered. Residues 550 to 563 (GSSSSSKSGMCLVS) show a composition bias toward low complexity. C560 carries the post-translational modification Cysteine methyl ester. Residue C560 is the site of S-farnesyl cysteine attachment. The propeptide at 561-563 (LVS) is removed in mature form.

It belongs to the protein kinase superfamily. AGC Ser/Thr protein kinase family. GPRK subfamily. As to quaternary structure, interacts (via N-terminus) with RCVRN (via C-terminus); the interaction is Ca(2+)-dependent. Interacts (when prenylated) with PDE6D; this promotes release from membranes. May form a complex composed of RHO, GRK1 and RCVRN in a Ca(2+)-dependent manner; RCVRN prevents the interaction between GRK1 and RHO. Post-translationally, autophosphorylated, Ser-21 is a minor site of autophosphorylation compared to Ser-491 and Thr-492. Phosphorylation at Ser-21 is regulated by light and activated by cAMP. In terms of processing, farnesylation is required for full activity. In terms of tissue distribution, retinal-specific. Expressed in rods and cones cells.

It is found in the membrane. The protein resides in the cell projection. Its subcellular location is the cilium. The protein localises to the photoreceptor outer segment. The enzyme catalyses L-threonyl-[rhodopsin] + ATP = O-phospho-L-threonyl-[rhodopsin] + ADP + H(+). It carries out the reaction L-seryl-[rhodopsin] + ATP = O-phospho-L-seryl-[rhodopsin] + ADP + H(+). With respect to regulation, inhibited by RCVRN, which prevents the interaction between GRK1 and RHO. Inhibition is calcium-dependent. Inhibited by phosphorylation of Ser-21. Retina-specific kinase involved in the signal turnoff via phosphorylation of rhodopsin (RHO), the G protein- coupled receptor that initiates the phototransduction cascade. This rapid desensitization is essential for scotopic vision and permits rapid adaptation to changes in illumination. May play a role in the maintenance of the outer nuclear layer in the retina. This chain is Rhodopsin kinase GRK1, found in Homo sapiens (Human).